The chain runs to 268 residues: MSRFETQFATLNAKNEGAFVPFVTLCDPTFDRSFEIICTLVDNGADALELGFPFSDPLLDGPVIQAANNRALTAGHSSEDSFKLLEKVRSKYPEIPISLLLCANLIFAKGLDAFYQRCAEVGVDAVLVADIPLLAKEDYVQAAKKHGIQPVFICPPNADEKTIQGVAENSEGYTYLVSRAGVTSAENQAHAANLDTLVEQLKAHNAPPILQGFGIAQPEQVKEALSLGTAGAISGSATVKIIERNLDNHEQCLAELAEFVQTMKAATK.

Residues glutamate 49 and aspartate 60 each act as proton acceptor in the active site.

The protein belongs to the TrpA family. In terms of assembly, tetramer of two alpha and two beta chains.

The catalysed reaction is (1S,2R)-1-C-(indol-3-yl)glycerol 3-phosphate + L-serine = D-glyceraldehyde 3-phosphate + L-tryptophan + H2O. Its pathway is amino-acid biosynthesis; L-tryptophan biosynthesis; L-tryptophan from chorismate: step 5/5. Its function is as follows. The alpha subunit is responsible for the aldol cleavage of indoleglycerol phosphate to indole and glyceraldehyde 3-phosphate. This chain is Tryptophan synthase alpha chain, found in Haemophilus influenzae (strain PittGG).